Reading from the N-terminus, the 901-residue chain is Protein translocase subunit SecA (901 aa).

Residues Gln-87, 105–109 (GEGKT), and Asp-512 contribute to the ATP site. Positions 859-901 (HQDDDSAAAAALAAQTGERKVGRNDPCPCGSGKKYKQCHGRLQ) are disordered. Zn(2+) is bound by residues Cys-885, Cys-887, Cys-896, and His-897. The segment covering 891 to 901 (KKYKQCHGRLQ) has biased composition (basic residues).

It belongs to the SecA family. Monomer and homodimer. Part of the essential Sec protein translocation apparatus which comprises SecA, SecYEG and auxiliary proteins SecDF-YajC and YidC. It depends on Zn(2+) as a cofactor.

The protein resides in the cell inner membrane. It localises to the cytoplasm. The enzyme catalyses ATP + H2O + cellular proteinSide 1 = ADP + phosphate + cellular proteinSide 2.. Part of the Sec protein translocase complex. Interacts with the SecYEG preprotein conducting channel. Has a central role in coupling the hydrolysis of ATP to the transfer of proteins into and across the cell membrane, serving both as a receptor for the preprotein-SecB complex and as an ATP-driven molecular motor driving the stepwise translocation of polypeptide chains across the membrane. This Shigella dysenteriae serotype 1 (strain Sd197) protein is Protein translocase subunit SecA.